The chain runs to 300 residues: Cis-3-alkyl-4-alkyloxetan-2-one decarboxylase (300 aa).

Positions 33 to 282 (VVVMLHGNPS…DDANHYVLED (250 aa)) constitute an AB hydrolase-1 domain.

This sequence belongs to the AB hydrolase superfamily. Homotetramer. Forms a complex with OleC and OleD.

Its subcellular location is the cytoplasm. It carries out the reaction a cis-3-alkyl-4-alkyloxetan-2-one = a cis-alkene + CO2. Functionally, involved in olefin biosynthesis. Catalyzes the elimination of carbon dioxide from beta-lactones to form the final olefin product. This Xanthomonas campestris pv. campestris (strain ATCC 33913 / DSM 3586 / NCPPB 528 / LMG 568 / P 25) protein is Cis-3-alkyl-4-alkyloxetan-2-one decarboxylase.